A 318-amino-acid polypeptide reads, in one-letter code: Myoblast determination protein 1 (318 aa).

Met1 participates in a covalent cross-link: Peptide (Met-Gly) (interchain with G-Cter in ubiquitin). The residue at position 104 (Lys104) is an N6-methyllysine; by EHMT2. Residues 109 to 160 form the bHLH domain; it reads DRRKAATMRERRRLSKVNEAFETLKRCTSSNPNQRLPKVEILRNAIRYIEGL. Disordered stretches follow at residues 174–224 and 266–318; these read AAAA…RRRN and APAL…YQVL. Polar residues predominate over residues 197-207; the sequence is SDASSPRSNCS. The segment covering 266–276 has biased composition (low complexity); it reads APALLLADAPP.

Efficient DNA binding requires dimerization with another bHLH protein. Seems to form active heterodimers with ITF-2. Interacts with SUV39H1. Interacts with DDX5. Interacts with CHD2. Interacts with TSC22D3. Interacts with SETD3. Interacts with P-TEFB complex; promotes the transcriptional activity of MYOD1 through its CDK9-mediated phosphorylation. Interacts with CSRP3. Interacts with NUPR1. Phosphorylated by CDK9. This phosphorylation promotes its function in muscle differentiation. In terms of processing, acetylated by a complex containing EP300 and PCAF. The acetylation is essential to activate target genes. Conversely, its deacetylation by SIRT1 inhibits its function. Post-translationally, ubiquitinated on the N-terminus; which is required for proteasomal degradation. Methylation at Lys-104 by EHMT2/G9a inhibits myogenic activity.

Its subcellular location is the nucleus. Its function is as follows. Acts as a transcriptional activator that promotes transcription of muscle-specific target genes and plays a role in muscle differentiation. Together with MYF5 and MYOG, co-occupies muscle-specific gene promoter core region during myogenesis. Induces fibroblasts to differentiate into myoblasts. Interacts with and is inhibited by the twist protein. This interaction probably involves the basic domains of both proteins. The sequence is that of Myoblast determination protein 1 (MYOD1) from Bos taurus (Bovine).